Reading from the N-terminus, the 157-residue chain is Transcriptional regulator MraZ (157 aa).

SpoVT-AbrB domains follow at residues 7–54 (TYEC…PMKE) and 83–126 (VRII…DKDL).

Belongs to the MraZ family. As to quaternary structure, forms oligomers.

Its subcellular location is the cytoplasm. The protein resides in the nucleoid. In Flavobacterium psychrophilum (strain ATCC 49511 / DSM 21280 / CIP 103535 / JIP02/86), this protein is Transcriptional regulator MraZ.